We begin with the raw amino-acid sequence, 95 residues long: YcgL domain-containing protein APJL_0712 (95 aa).

The region spanning 4-88 (HLCAIYKSPK…PPENLLKTFL (85 aa)) is the YcgL domain.

The protein is YcgL domain-containing protein APJL_0712 of Actinobacillus pleuropneumoniae serotype 3 (strain JL03).